Consider the following 396-residue polypeptide: Subtilisin-like protease 5 (396 aa).

The first 20 residues, 1 to 20, serve as a signal peptide directing secretion; it reads MTGFFTILSFSLAALSVTNA. Residues 21-116 constitute a propeptide that is removed on maturation; the sequence is AQILSVPKGA…VEPDAIISQH (96 aa). The region spanning 37 to 113 is the Inhibitor I9 domain; it reads YIVVMKDDTS…VAFVEPDAII (77 aa). N-linked (GlcNAc...) asparagine glycosylation occurs at N63. In terms of domain architecture, Peptidase S8 spans 125 to 396; sequence PWGLSRLSNR…SRLLYNGSGR (272 aa). Residues D156 and H187 each act as charge relay system in the active site. 2 N-linked (GlcNAc...) asparagine glycosylation sites follow: N230 and N248. The active-site Charge relay system is the S342. The segment covering 376–389 has biased composition (polar residues); the sequence is PTIRNPGPDTTSRL. Residues 376-396 are disordered; sequence PTIRNPGPDTTSRLLYNGSGR. N392 carries an N-linked (GlcNAc...) asparagine glycan.

Belongs to the peptidase S8 family.

It is found in the secreted. Functionally, secreted subtilisin-like serine protease with keratinolytic activity that contributes to pathogenicity. The protein is Subtilisin-like protease 5 (SUB5) of Trichophyton verrucosum (Cattle ringworm fungus).